The chain runs to 114 residues: T cell receptor beta variable 6-9 (114 aa).

Residues 1–21 (MSIGLLCCVAFSLLWAGPVNA) form the signal peptide. Residues 22 to 114 (GVTQTPKFHI…TSVYFCASSY (93 aa)) form the Ig-like domain. Cysteines 42 and 110 form a disulfide. Residue N84 is glycosylated (N-linked (GlcNAc...) asparagine).

Alpha-beta TR is a heterodimer composed of an alpha and beta chain; disulfide-linked. The alpha-beta TR is associated with the transmembrane signaling CD3 coreceptor proteins to form the TR-CD3 (TcR or TCR). The assembly of alpha-beta TR heterodimers with CD3 occurs in the endoplasmic reticulum where a single alpha-beta TR heterodimer associates with one CD3D-CD3E heterodimer, one CD3G-CD3E heterodimer and one CD247 homodimer forming a stable octameric structure. CD3D-CD3E and CD3G-CD3E heterodimers preferentially associate with TR alpha and TR beta chains, respectively. The association of the CD247 homodimer is the last step of TcR assembly in the endoplasmic reticulum and is required for transport to the cell surface.

It localises to the cell membrane. V region of the variable domain of T cell receptor (TR) beta chain that participates in the antigen recognition. Alpha-beta T cell receptors are antigen specific receptors which are essential to the immune response and are present on the cell surface of T lymphocytes. Recognize peptide-major histocompatibility (MH) (pMH) complexes that are displayed by antigen presenting cells (APC), a prerequisite for efficient T cell adaptive immunity against pathogens. Binding of alpha-beta TR to pMH complex initiates TR-CD3 clustering on the cell surface and intracellular activation of LCK that phosphorylates the ITAM motifs of CD3G, CD3D, CD3E and CD247 enabling the recruitment of ZAP70. In turn ZAP70 phosphorylates LAT, which recruits numerous signaling molecules to form the LAT signalosome. The LAT signalosome propagates signal branching to three major signaling pathways, the calcium, the mitogen-activated protein kinase (MAPK) kinase and the nuclear factor NF-kappa-B (NF-kB) pathways, leading to the mobilization of transcription factors that are critical for gene expression and essential for T cell growth and differentiation. The T cell repertoire is generated in the thymus, by V-(D)-J rearrangement. This repertoire is then shaped by intrathymic selection events to generate a peripheral T cell pool of self-MH restricted, non-autoaggressive T cells. Post-thymic interaction of alpha-beta TR with the pMH complexes shapes TR structural and functional avidity. The sequence is that of T cell receptor beta variable 6-9 from Homo sapiens (Human).